The chain runs to 1616 residues: Myosin-IIIa (1616 aa).

In terms of domain architecture, Protein kinase spans 21–287; it reads WEITETIGKG…VSELLQHKFI (267 aa). Residues 27–35 and Lys50 contribute to the ATP site; that span reads IGKGTYGKV. Asp150 functions as the Proton acceptor in the catalytic mechanism. The Myosin motor domain maps to 338–1053; sequence KDVDDLATLE…HVEQLNLMRK (716 aa). The interval 934 to 956 is actin-binding; the sequence is LMDLLSKMVVGQPHFVRCIKPNS. IQ domains are found at residues 1055–1084, 1082–1111, and 1346–1375; these read AIDK…KRKE, RKES…MKNT, and EDKA…SSFK. An interaction with MORN4 region spans residues 1401 to 1479; that stretch reads EEINNIKKKD…RRVSSQQCLS (79 aa). Disordered regions lie at residues 1545–1567 and 1581–1616; these read LPSR…QQEL and AESP…VQQS. Basic and acidic residues-rich tracts occupy residues 1550 to 1564 and 1583 to 1592; these read GPKE…RRPQ and SPEKEEEREP. The segment covering 1602–1616 has biased composition (basic residues); it reads LLRKTSQRRRLVQQS.

This sequence in the C-terminal section; belongs to the TRAFAC class myosin-kinesin ATPase superfamily. Myosin family. In the N-terminal section; belongs to the protein kinase superfamily. STE Ser/Thr protein kinase family. As to quaternary structure, interacts with MORN4. Interacts (via C-terminus) with ESPN and ESPNL. As to expression, strongest expression in retina, retinal pigment epithelial cells, cochlea and pancreas.

Its subcellular location is the cytoplasm. The protein localises to the cytoskeleton. It is found in the cell projection. The protein resides in the filopodium tip. It localises to the stereocilium. It catalyses the reaction L-seryl-[protein] + ATP = O-phospho-L-seryl-[protein] + ADP + H(+). It carries out the reaction L-threonyl-[protein] + ATP = O-phospho-L-threonyl-[protein] + ADP + H(+). The catalysed reaction is ATP + H2O = ADP + phosphate + H(+). Functionally, actin-dependent motor protein with a protein kinase activity, playing an essential role in hearing. Probably also plays a role in vision. Required for normal cochlear hair bundle development and hearing. Plays an important role in the early steps of cochlear hair bundle morphogenesis. Influences the number and lengths of stereocilia to be produced and limits the growth of microvilli within the forming auditory hair bundles thereby contributing to the architecture of the hair bundle, including its staircase pattern. Involved in the elongation of actin in stereocilia tips by transporting the actin regulatory factor ESPN to the plus ends of actin filaments. The chain is Myosin-IIIa (MYO3A) from Homo sapiens (Human).